Here is a 526-residue protein sequence, read N- to C-terminus: mRNA export factor ICP27 homolog (526 aa).

Zn(2+)-binding residues include Cys-239, His-344, Cys-346, and Cys-351. The CHC2-type zinc-finger motif lies at 239–351 (CVFNDNGHGD…NNHQCDDIGC (113 aa)).

Belongs to the HHV-1 ICP27 protein family.

The protein resides in the virion tegument. The protein localises to the virion. Its subcellular location is the host nucleus. It localises to the host cytoplasm. Its function is as follows. Immediate early (EI) protein that plays many roles during productive infection including regulation of viral gene expression and nuclear export of intronless viral RNAs. The protein is mRNA export factor ICP27 homolog of Human herpesvirus 7 (strain JI) (HHV-7).